The primary structure comprises 396 residues: S-adenosylmethionine synthase (396 aa).

Residue His-16 coordinates ATP. Residue Asp-18 coordinates Mg(2+). Glu-44 contributes to the K(+) binding site. Glu-57 and Gln-100 together coordinate L-methionine. The tract at residues 100–110 is flexible loop; it reads QSPDINQGVDR. Residues 165–167, 231–232, Asp-240, 246–247, Ala-263, and Lys-267 each bind ATP; these read DAK, KF, and RK. Asp-240 is a binding site for L-methionine. Lys-271 serves as a coordination point for L-methionine.

This sequence belongs to the AdoMet synthase family. Homotetramer; dimer of dimers. It depends on Mg(2+) as a cofactor. K(+) is required as a cofactor.

The protein resides in the cytoplasm. The enzyme catalyses L-methionine + ATP + H2O = S-adenosyl-L-methionine + phosphate + diphosphate. It functions in the pathway amino-acid biosynthesis; S-adenosyl-L-methionine biosynthesis; S-adenosyl-L-methionine from L-methionine: step 1/1. In terms of biological role, catalyzes the formation of S-adenosylmethionine (AdoMet) from methionine and ATP. The overall synthetic reaction is composed of two sequential steps, AdoMet formation and the subsequent tripolyphosphate hydrolysis which occurs prior to release of AdoMet from the enzyme. In Ectopseudomonas mendocina (strain ymp) (Pseudomonas mendocina), this protein is S-adenosylmethionine synthase.